The sequence spans 322 residues: Porphobilinogen deaminase (322 aa).

An S-(dipyrrolylmethanemethyl)cysteine modification is found at Cys-254.

Belongs to the HMBS family. Monomer. It depends on dipyrromethane as a cofactor.

The catalysed reaction is 4 porphobilinogen + H2O = hydroxymethylbilane + 4 NH4(+). The protein operates within porphyrin-containing compound metabolism; protoporphyrin-IX biosynthesis; coproporphyrinogen-III from 5-aminolevulinate: step 2/4. Its function is as follows. Tetrapolymerization of the monopyrrole PBG into the hydroxymethylbilane pre-uroporphyrinogen in several discrete steps. The polypeptide is Porphobilinogen deaminase (Methylococcus capsulatus (strain ATCC 33009 / NCIMB 11132 / Bath)).